The following is a 273-amino-acid chain: Dermonecrotic toxin LdSicTox-alphaIB3b (273 aa).

The active site involves His5. Residues Glu25 and Asp27 each contribute to the Mg(2+) site. Catalysis depends on His41, which acts as the Nucleophile. 2 disulfide bridges follow: Cys45/Cys51 and Cys47/Cys190. A Mg(2+)-binding site is contributed by Asp85.

The protein belongs to the arthropod phospholipase D family. Class II subfamily. It depends on Mg(2+) as a cofactor. As to expression, expressed by the venom gland.

It is found in the secreted. It carries out the reaction an N-(acyl)-sphingosylphosphocholine = an N-(acyl)-sphingosyl-1,3-cyclic phosphate + choline. The catalysed reaction is an N-(acyl)-sphingosylphosphoethanolamine = an N-(acyl)-sphingosyl-1,3-cyclic phosphate + ethanolamine. The enzyme catalyses a 1-acyl-sn-glycero-3-phosphocholine = a 1-acyl-sn-glycero-2,3-cyclic phosphate + choline. It catalyses the reaction a 1-acyl-sn-glycero-3-phosphoethanolamine = a 1-acyl-sn-glycero-2,3-cyclic phosphate + ethanolamine. Its function is as follows. Dermonecrotic toxins cleave the phosphodiester linkage between the phosphate and headgroup of certain phospholipids (sphingolipid and lysolipid substrates), forming an alcohol (often choline) and a cyclic phosphate. This toxin acts on sphingomyelin (SM). It may also act on ceramide phosphoethanolamine (CPE), lysophosphatidylcholine (LPC) and lysophosphatidylethanolamine (LPE), but not on lysophosphatidylserine (LPS), and lysophosphatidylglycerol (LPG). It acts by transphosphatidylation, releasing exclusively cyclic phosphate products as second products. Induces dermonecrosis, hemolysis, increased vascular permeability, edema, inflammatory response, and platelet aggregation. In Loxosceles deserta (Desert recluse spider), this protein is Dermonecrotic toxin LdSicTox-alphaIB3b.